A 66-amino-acid polypeptide reads, in one-letter code: UPF0337 protein SpyM3_0896 (66 aa).

It belongs to the UPF0337 (CsbD) family.

This is UPF0337 protein SpyM3_0896 from Streptococcus pyogenes serotype M3 (strain ATCC BAA-595 / MGAS315).